A 316-amino-acid chain; its full sequence is Homoserine kinase (316 aa).

ATP is bound at residue 97-107; that stretch reads PPARGLGSSAS.

Belongs to the GHMP kinase family. Homoserine kinase subfamily.

It is found in the cytoplasm. The enzyme catalyses L-homoserine + ATP = O-phospho-L-homoserine + ADP + H(+). It functions in the pathway amino-acid biosynthesis; L-threonine biosynthesis; L-threonine from L-aspartate: step 4/5. Functionally, catalyzes the ATP-dependent phosphorylation of L-homoserine to L-homoserine phosphate. This Prochlorococcus marinus (strain MIT 9313) protein is Homoserine kinase.